Consider the following 272-residue polypeptide: Large ribosomal subunit protein uL3 (272 aa).

The interval 125-146 (QHIGPKSHGGGGGSQPLRQTGS) is disordered.

It belongs to the universal ribosomal protein uL3 family. As to quaternary structure, part of the 50S ribosomal subunit. Forms a cluster with proteins L14 and L19.

Its function is as follows. One of the primary rRNA binding proteins, it binds directly near the 3'-end of the 23S rRNA, where it nucleates assembly of the 50S subunit. In Metamycoplasma arthritidis (strain 158L3-1) (Mycoplasma arthritidis), this protein is Large ribosomal subunit protein uL3.